The sequence spans 234 residues: MRILLVEDETDLGMAIKKVLVSEKYVVDWVTDGSQAWDYLENQWTEYTLAIVDWLLPGLSGLELCQKLRTQGNSLPVLMLTALGEPENRVEGLDAGADDYLTKPFVMAELLARLRALQRRSPQFQPQILTLGNFSLDPSNNLLSVTISEPLNLERQEIALTVREFQIFQYLMQNPERIISGSKIRQQLWDLDEEPMSNVVAAQMRLIRRKLAQQNCPCPIKTVPGQGYRFTLSP.

The Response regulatory domain occupies 2-118; that stretch reads RILLVEDETD…ELLARLRALQ (117 aa). 4-aspartylphosphate is present on D53. The ompR/PhoB-type DNA-binding region spans 126–232; it reads PQILTLGNFS…VPGQGYRFTL (107 aa).

Interacts with histidine kinase Hik2; may accept phosphate from Hik2.

Functionally, member of two-component regulatory system RppA/RppB, involved in the establishment of the appropriate stoichiometry between the 2 photosystems. It senses changes in the plastoquinone (PQ) redox poise. Another group shows this two-component pair, renamed NrsR/NrsS, controls the nickel-dependent expression of the nrsBACD operon; they suggest the photosystem-related activities seen earlier are due to the expression of NrsS (RppB) in the absence of its natural substrate NrsR (RppA). May accept phosphate from Hik2 in a possible Hik2/RppA two-component system. This Synechocystis sp. (strain ATCC 27184 / PCC 6803 / Kazusa) protein is Response regulator RppA.